The following is a 655-amino-acid chain: p-hydroxybenzoic acid efflux pump subunit AaeB (655 aa).

A run of 11 helical transmembrane segments spans residues 13–33, 38–58, 69–89, 93–113, 121–141, 152–172, 370–390, 407–427, 431–451, 459–479, and 482–502; these read FAVK…HFQL, WAVL…GGEP, LRII…ISMI, LLMI…SSLV, WGLS…EPLL, EIVI…PRSI, LFWL…IAVV, FIYG…VIIP, QSML…GIEV, MGAL…TFHF, and FLDS…VILL.

It belongs to the aromatic acid exporter ArAE (TC 2.A.85) family.

The protein resides in the cell inner membrane. Forms an efflux pump with AaeA. Could function as a metabolic relief valve, allowing to eliminate certain compounds when they accumulate to high levels in the cell. This is p-hydroxybenzoic acid efflux pump subunit AaeB from Salmonella enteritidis PT4 (strain P125109).